The chain runs to 281 residues: Large ribosomal subunit protein uL2 (281 aa).

The disordered stretch occupies residues 223–281; that stretch reads VRGSVMNPVDHPHGGGEGKQPVGRKSPLTPWGKIALGVKTRKTKKSSNKLILRRRKDAK. Residues 261–281 show a composition bias toward basic residues; the sequence is KTRKTKKSSNKLILRRRKDAK.

This sequence belongs to the universal ribosomal protein uL2 family. Part of the 50S ribosomal subunit. Forms a bridge to the 30S subunit in the 70S ribosome.

Its function is as follows. One of the primary rRNA binding proteins. Required for association of the 30S and 50S subunits to form the 70S ribosome, for tRNA binding and peptide bond formation. It has been suggested to have peptidyltransferase activity; this is somewhat controversial. Makes several contacts with the 16S rRNA in the 70S ribosome. The polypeptide is Large ribosomal subunit protein uL2 (Mycoplasmopsis synoviae (strain 53) (Mycoplasma synoviae)).